A 350-amino-acid chain; its full sequence is Small ribosomal subunit biogenesis GTPase RsgA (350 aa).

Over residues Met-1 to Asn-17 the composition is skewed to polar residues. Residues Met-1–Glu-27 form a disordered region. Residues Thr-104–Phe-273 enclose the CP-type G domain. Residues Asn-160–Asp-163 and Gly-214–Ser-222 contribute to the GTP site. Zn(2+) contacts are provided by Cys-297, Cys-302, His-304, and Cys-310.

Belongs to the TRAFAC class YlqF/YawG GTPase family. RsgA subfamily. Monomer. Associates with 30S ribosomal subunit, binds 16S rRNA. Requires Zn(2+) as cofactor.

It is found in the cytoplasm. In terms of biological role, one of several proteins that assist in the late maturation steps of the functional core of the 30S ribosomal subunit. Helps release RbfA from mature subunits. May play a role in the assembly of ribosomal proteins into the subunit. Circularly permuted GTPase that catalyzes slow GTP hydrolysis, GTPase activity is stimulated by the 30S ribosomal subunit. In Salmonella typhi, this protein is Small ribosomal subunit biogenesis GTPase RsgA.